We begin with the raw amino-acid sequence, 228 residues long: uncharacterized protein (228 aa).

An ATP-binding site is contributed by 21–28 (GMIALGKT).

This is an uncharacterized protein from Mycoplasma genitalium (strain ATCC 33530 / DSM 19775 / NCTC 10195 / G37) (Mycoplasmoides genitalium).